The primary structure comprises 1770 residues: MAQQQQQQQQQQHLQHPHQNTNSNNQLQQQQQQLQLQLQLQLQEQQEQQQQQLQLQQYNNNFYSQNYNMEEYERRKRREREKIERQQGIQIDDRETALFSEPRRLTEGDAEITAALGEFGDARVYINQSTVGISRHAPGAGNPRLQAPPPPKTLGHSHSPSSSSAAGSGSGSALPGQSQSQQQQQKQHYQQQQQQQRPPGYLKQADNKPPYNGRGGYPGQPMKNDIPSSSGMAPPRGPPRSGSGSISNSNSNSSSATNNATGGAAGTTPLGPPLSTQMPNGREKSFLGPPAPALHNGAGLFVPPAASKRPGGGSGAGLQPPPPEKDITKMISEMTNSFRVTAPLTSIAATPHAPTRENYNLNGPNTNKYAFGPIGSPPIGSQPSSLMAPLFAPIAPIASPITSLLTTPPHASQGSLGGASPVAPLQQLPPTPPKAAAALSPTAAAKPLKTEKNHTLEKQDSCLENDLELSESEDEQRKKESRSAGNSSNSSESDSSESGSESSSKGDHQQQHHHHNHHHQQQQQQLQQQQQQQLLQQKQQHQQILQQQQRQLTANGSKKKYSHSIIAGGGSTISGLLTSSGFGSGGAGNGGCSTASSGGGGGGSGSGGGSGSSSGIGTMSSGSSSNKTPSPTESNKWTLSRFFPKPANQTSSESVSPGNVSMKVPGILPGGAQIIPESIEVTTAIVKNEKIHDDHMDMDEVEEEDEDEEQLQQQQQLRYGAGLSVTPVAVAVKKEALDGVGEMGGLPAIPKNQIKREAEALHSAARLSDSGTSGSGSTSSSSSSSDSAPGEVVPMPGPGETLQLPGVPAAITTVMRVHPTLMQKAPPNSVTLTPILPLPASPKQRQKKPRKKKPATSAPILDSSDDDDPPAAKHALELSAAAAAAAQAQATATVPPLAVKKGRGRPRKQQQSGGSGNLSSASAGSSSQTKGPTLTAAKKPLVKGPAMANSRKRDHSSQSSSNGNTPTKKLAMGTGTGTGTAMAVPMTVIPSGPANASAVAAASSSSDEDSSSSTGSTGSKSSSSSSSSDDTETTQNTKCRIVKLNKTGAVPPLARLGAVASAGAGAGAGASGSSSPSSSSSEPEDHLAMSTVSALPMAQQLMQPYKPRAVSQHSQQLSSSECSSSSGSSTSGDEDEAKREKERERKRKSDKNKISTLTRIFNPKEGGAKKQGQVVIMDQSEEQQQVKVGDSSSQPVPVQNAAIAKLRMTPTQQQQQLGAGLASPARTTTPHLTSLICKIDLSKLSRERIMRLKKLTPSQQNGHLTPKDLVTIQTQGPSQPVQGHLLPAKVKHEHPHPVKPEPELDAGYESKFKPGNVKQEFQLKQERDRERERERDRDRERERERERDREREREQPTGGRRRKRSSSSSSSPYKEKKRKKEKSDHLQISKDQLLPVPVLLPSNNHERISCHERLSFDKLQLLHEDAAAVAAAAAAVSAPNGSPSKKLLVMSPLPPPPTAVVVPPAVVAPSTCSEAVQTTPPSAAATATAATSTTGTSTAPPAPVTRLIYRSYFDREEEPHSDDHRKNNQFLVEAVNRKHAADSERDSFNQVTLYLEAVVYFLLTADSMERSSSEQATWTIYKDTLSLIKFISSKFRPYQQSTNGQHETHNKVAILSLRCQSLISLKLYKLRRTNCRTVINSLTEFFRTGRGDIVNGNTPSSISPSNSVGSQGSGSNTPPGKIVPQEIHTQLSKQNEYLTYVNSAHELWDQADRLVRTGNHIDFFRELDHENGPLTLHSTMPEVFRYVQAGLKTLRDAVSHPTQQTLHQSH.

3 stretches are compositionally biased toward low complexity: residues 1-19, 154-204, and 227-269; these read MAQQQQQQQQQQHLQHPHQ, LGHS…YLKQ, and PSSS…GTTP. Disordered regions lie at residues 1 to 28, 134 to 327, 402 to 660, 761 to 805, 822 to 1173, and 1291 to 1390; these read MAQQQQQQQQQQHLQHPHQNTNSNNQLQ, SRHA…EKDI, TSLL…PGNV, LHSA…LQLP, MQKA…KQGQ, and KHEH…QISK. A compositionally biased stretch (polar residues) spans 402-414; that stretch reads TSLLTTPPHASQG. Low complexity predominate over residues 434 to 447; that stretch reads KAAAALSPTAAAKP. Basic and acidic residues predominate over residues 448 to 461; sequence LKTEKNHTLEKQDS. Residues 463–474 are compositionally biased toward acidic residues; sequence LENDLELSESED. S470 and S472 each carry phosphoserine. The span at 483–503 shows a compositional bias: low complexity; sequence SAGNSSNSSESDSSESGSESS. Residues 511-520 are compositionally biased toward basic residues; it reads QHHHHNHHHQ. Residues 521-552 are compositionally biased toward low complexity; the sequence is QQQQQLQQQQQQQLLQQKQQHQQILQQQQRQL. Residues 582–614 are compositionally biased toward gly residues; the sequence is FGSGGAGNGGCSTASSGGGGGGSGSGGGSGSSS. The segment covering 615 to 625 has biased composition (low complexity); the sequence is GIGTMSSGSSS. Composition is skewed to polar residues over residues 626–638 and 647–659; these read NKTPSPTESNKWT and ANQTSSESVSPGN. The segment covering 768–800 has biased composition (low complexity); it reads SDSGTSGSGSTSSSSSSSDSAPGEVVPMPGPGE. Residues 844 to 854 show a composition bias toward basic residues; the sequence is QRQKKPRKKKP. Phosphoserine occurs at positions 863 and 864. 5 stretches are compositionally biased toward low complexity: residues 880-893, 909-928, 994-1028, 1071-1081, and 1111-1131; these read AAAAAAAQAQATAT, QQQSGGSGNLSSASAGSSSQ, ANASAVAAASSSSDEDSSSSTGSTGSKSSSSSSSS, SGSSSPSSSSS, and SQHSQQLSSSECSSSSGSSTS. The a.T hook DNA-binding region spans 900–912; the sequence is KKGRGRPRKQQQS. 2 positions are modified to phosphoserine: S920 and S922. 2 stretches are compositionally biased toward basic and acidic residues: residues 1295-1312 and 1321-1355; these read PHPVKPEPELDAGYESKF and FQLKQERDRERERERDRDRERERERERDREREREQ. Phosphoserine is present on S1442. Composition is skewed to low complexity over residues 1483 to 1499 and 1656 to 1676; these read AAATATAATSTTGTSTA and GNTPSSISPSNSVGSQGSGSN. 2 disordered regions span residues 1483-1502 and 1656-1683; these read AAATATAATSTTGTSTAPPA and GNTPSSISPSNSVGSQGSGSNTPPGKIV.

Belongs to the AF4 family.

Its subcellular location is the nucleus. Its function is as follows. Has a role in transcriptional regulation. Acts in parallel with the Ras/MAPK and the PI3K/PKB pathways in the control of cell identity and cellular growth. Essential for regulation of the cytoskeleton and cell growth but not for cell proliferation or growth rate. Required specifically for the microtubule-based basal transport of lipid droplets. Plays a partially redundant function downstream of Raf in cell fate specification in the developing eye. Pair-rule protein that regulates embryonic cellularization, gastrulation and segmentation. This chain is AF4/FMR2 family member lilli, found in Drosophila pseudoobscura pseudoobscura (Fruit fly).